Consider the following 464-residue polypeptide: MSSGRIIQIIGAVIDVEFERTSVPKIYDALQVDGTETTLEVQQQLGDGVVRTIAMGSTEGLKRGLTVTSTNAPISVPVGTATLGRIMDVLGRPIDEAGPVATEERLPIHRQAPSYAEQAASTDLLETGIKVIDLLCPFAKGGKVGLFGGAGVGKTVNMMELINNIAKAHSGLSVFAGVGERTREGNDFYHEMKDSNVLDKVAMVYGQMNEPPGNRLRVALTGLTMAEYFRDEKDENGKGRDVLLFVDNIYRYTLAGTEVSALLGRMPSAVGYQPTLAEEMGVLQERITSTKSGSITSIQAVYVPADDLTDPSPATTFAHLDATVVLSRDIASSGIYPAIDPLDSTSRQLDPLVVGQEHYEIARAVQNVLQRYKELKDIIAILGMDELAEEDKLVVYRARKIQRFFSQPFHVAEVFTGAPGKLVPLKETIRGFKGLLAGEYDHIPEQAFYMVGGIDEVIAKAEKL.

148–155 contributes to the ATP binding site; it reads GGAGVGKT.

Belongs to the ATPase alpha/beta chains family. In terms of assembly, F-type ATPases have 2 components, CF(1) - the catalytic core - and CF(0) - the membrane proton channel. CF(1) has five subunits: alpha(3), beta(3), gamma(1), delta(1), epsilon(1). CF(0) has three main subunits: a(1), b(2) and c(9-12). The alpha and beta chains form an alternating ring which encloses part of the gamma chain. CF(1) is attached to CF(0) by a central stalk formed by the gamma and epsilon chains, while a peripheral stalk is formed by the delta and b chains.

Its subcellular location is the cell inner membrane. It carries out the reaction ATP + H2O + 4 H(+)(in) = ADP + phosphate + 5 H(+)(out). Its function is as follows. Produces ATP from ADP in the presence of a proton gradient across the membrane. The catalytic sites are hosted primarily by the beta subunits. The sequence is that of ATP synthase subunit beta from Acinetobacter baumannii (strain AB0057).